The primary structure comprises 1282 residues: Clustered mitochondria protein homolog (1282 aa).

The disordered stretch occupies residues 1-50; that stretch reads MADASQATTPAAEGNPVPEVPETQTPPADVNGTTEQEQTEEGAEQALEDQ. The segment covering 16–36 has biased composition (low complexity); it reads PVPEVPETQTPPADVNGTTEQ. Residues 37 to 47 show a composition bias toward acidic residues; it reads EQTEEGAEQAL. A Clu domain is found at 331–575; it reads DNTRSQETYL…RITPLDIAWM (245 aa). Positions 623 to 650 form a coiled coil; it reads EEKKEGEEATEEAKTEEIKTEEAEKSEE. 2 stretches are compositionally biased toward basic and acidic residues: residues 624 to 661 and 668 to 680; these read EKKE…KTEE and VAEK…AKED. 2 disordered regions span residues 624 to 680 and 913 to 945; these read EKKE…AKED and PVAE…TSPV. TPR repeat units lie at residues 1021 to 1054, 1063 to 1096, and 1105 to 1138; these read AQMY…AERT, VLNY…WKVI, and ITTM…CNKV. Residues 1257-1282 form a disordered region; sequence VENSEKKKGGKKSKGPSNPKKRGGKA. A compositionally biased stretch (basic residues) spans 1264 to 1282; the sequence is KGGKKSKGPSNPKKRGGKA.

Belongs to the CLU family. May associate with the eukaryotic translation initiation factor 3 (eIF-3) complex.

The protein localises to the cytoplasm. Functionally, mRNA-binding protein involved in proper cytoplasmic distribution of mitochondria. The chain is Clustered mitochondria protein homolog from Neurospora crassa (strain ATCC 24698 / 74-OR23-1A / CBS 708.71 / DSM 1257 / FGSC 987).